Here is a 396-residue protein sequence, read N- to C-terminus: MITSIDIADVTYSAKPRILVPYKTQWEVASHLPEYRKLAERVEFYKYEMSTKDDFVKFLETHRINGFWLTEEFFTVLGNPSSYIEFFPASLKVILVPWVGCDFIDGKLLRSKGITLCNIGPHAADHVTELAIFLAISCFRMTSFWEYCFKYVENGNVEQCKKYISSDSYEIVTDSYHGQEMKFPSRTDKCKPNKDRKVVHLAEKYTVGGKKMESPMNKKVLILGFGSIGQNIGSNLHKVFNMSIEYYKRTGPVQKSLLDYNAKYHSDLDDPNTWKNADLIILALPSTASTNNIINRKSLAWCKDGVRIVNVGRGTCIDEDVLLDALESGKVASCGLDVFKNEETRVKQELLRRWDVTALPHIGSTVADMVIKQTLITLENVQDIFVEGGDGKYVLN.

Residues 227–228, 311–313, and Asp-337 contribute to the NAD(+) site; these read SI and VGR. The active site involves Arg-313. Glu-342 is a catalytic residue. Residue His-361 is the Proton donor of the active site. 361–364 is a binding site for NAD(+); it reads HIGS.

The protein belongs to the D-isomer specific 2-hydroxyacid dehydrogenase family.

Its function is as follows. Putative 2-hydroxyacid dehydrogenase. This is Putative 2-hydroxyacid dehydrogenase YPL113C from Saccharomyces cerevisiae (strain ATCC 204508 / S288c) (Baker's yeast).